The chain runs to 250 residues: DNA repair protein RecO (250 aa).

It belongs to the RecO family.

Functionally, involved in DNA repair and RecF pathway recombination. This Staphylococcus haemolyticus (strain JCSC1435) protein is DNA repair protein RecO.